A 44-amino-acid chain; its full sequence is Photosystem I reaction center subunit IX (44 aa).

A helical transmembrane segment spans residues 9-29 (FVRSAPVVAAIWLSLTAGIII).

Belongs to the PsaJ family.

It localises to the cellular thylakoid membrane. Functionally, may help in the organization of the PsaE and PsaF subunits. This Prochlorococcus marinus (strain MIT 9301) protein is Photosystem I reaction center subunit IX.